Consider the following 179-residue polypeptide: MARLKDVYQNEVVQKLRAEFNYKNIMEVPRIEKVVINMGLGEAIQNVKILDSAASELGKITGQKAVITKAKKSIASFKLREGMPIGCMVTLRRERMYEFLDRLMNVALARVRDFKGVSGKAFDGQGNYTLGIKEQLIFPEINYDEIDKIKGLNVTIVTSAKNDEEGKALLKHMGMPFRN.

Belongs to the universal ribosomal protein uL5 family. As to quaternary structure, part of the 50S ribosomal subunit; part of the 5S rRNA/L5/L18/L25 subcomplex. Contacts the 5S rRNA and the P site tRNA. Forms a bridge to the 30S subunit in the 70S ribosome.

In terms of biological role, this is one of the proteins that bind and probably mediate the attachment of the 5S RNA into the large ribosomal subunit, where it forms part of the central protuberance. In the 70S ribosome it contacts protein S13 of the 30S subunit (bridge B1b), connecting the 2 subunits; this bridge is implicated in subunit movement. Contacts the P site tRNA; the 5S rRNA and some of its associated proteins might help stabilize positioning of ribosome-bound tRNAs. This is Large ribosomal subunit protein uL5 from Trichlorobacter lovleyi (strain ATCC BAA-1151 / DSM 17278 / SZ) (Geobacter lovleyi).